A 1710-amino-acid polypeptide reads, in one-letter code: MSLDFGSVALPVQNEDEEYDEEDYEREKELQQLLTDLPHDMLDDDLSSPELQYSDCSEDGTDGQPHHPEQLEMSWNEQMLPKSQSVNGYNEIQSLYAGEKCGNVWEENRSKTEDRHPVYHPEEGGDEGGSGYSPPSKCEQTDLYHLPENFRPYTNGQKQEFNNQATNVIKFSDPQWNHFQGPSCQGLEPYNKVTYKPYQSSAQNNGSPAQEITGSDTFEGLQQQFLGANENSAENMQIIQLQVLNKAKERQLENLIEKLNESERQIRYLNHQLVIIKDEKDGLTLSLRESQKLFQNGKEREIQLEAQIKALETQIQALKVNEEQMIKKSRTTEMALESLKQQLVDLHHSESLQRAREQHESIVMGLTKKYEEQVLSLQKNLDATVTALKEQEDICSRLKDHVKQLERNQEAIKLEKTEIINKLTRSLEESQKQCAHLLQSGSVQEVAQLQFQLQQAQKAHAMSANMNKALQEELTELKDEISLYESAAKLGIHPSDSEGELNIELTESYVDLGIKKVNWKKSKVTSIVQEEDPNEELSKDEFILKLKAEVQRLLGSNSMKRHLVSQLQNDLKDCHKKIEDLHQVKKDEKSIEVETKTDTSEKPKNQLWPESSTSDVVRDDILLLKNEIQVLQQQNQELKETEGKLRNTNQDLCNQMRQMVQDFDHDKQEAVDRCERTYQQHHEAMKTQIRESLLAKHALEKQQLFEAYERTHLQLRSELDKLNKEVTAVQECYLEVCREKDNLELTLRKTTEKEQQTQEKIKEKLIQQLEKEWQSKLDQTIKAMKKKTLDCGSQTDQVTTSDVISKKEMAIMIEEQKCTIQQNLEQEKDIAIKGAMKKLEIELELKHCENITKQVEIAVQNAHQRWLGELPELAEYQALVKAEQKKWEEQHEVSVNKRISFAVSEAKEKWKSELENMRKNILPGKELEEKIHSLQKELELKNEEVPVVIRAELAKARSEWNKEKQEEIHRIQEQNEQDYRQFLDDHRNKINEVLAAAKEDFMKQKTELLLQKETELQTCLDQSRREWTMQEAKRIQLEIYQYEEDILTVLGVLLSDTQKEHISDSEDKQLLEIMSTCSSKWMSVQYFEKLKGCIQKAFQDTLPLLVENADPEWKKRNMAELSKDSASQGTGQGDPGPAAGHHAQPLALQATEAEADKKKVLEIKDLCCGHCFQELEKAKQECQDLKGKLEKCCRHLQHLERKHKAVVEKIGEENNKVVEELIEENNDMKNKLEELQTLCKTPPRSLSAGAIENACLPCSGGALEELRGQYIKAVKKIKCDMLRYIQESKERAAEMVKAEVLRERQETARKMRKYYLICLQQILQDDGKEGAEKKIMNAASKLATMAKLLETPISSKSQSKTTQSALPLTSEMLIAVKKSKRNDVNQKIPCCIESKSNSVNTITRTLCEQAPKRRAACNLQRLLENSEHQSIKHVGSKETHLEFQFGDGSCKHLNSLPRNVSPEFVPCEGEGGFGLHKKKDLLSDNGSESLPHSAAYPFLGTLGNKPSPRCTPGPSESGCMHITFRDSNERLGLKVYKCNPLMESENAASEKSQGLDVQEPPVKDGGDLSDCLGWPSSSATLSFDSREASFVHGRPQGTLEIPSESVKSKQFSPSGYLSDTEESNMICQTMKCQRYQTPYLSEETTYLEPGKISVNCGHPSRHKADRLKSDFKKLSSTLPSSVCQQPSRKLIVPLSSQQDSGFDSPFVNLD.

Disordered regions lie at residues 1 to 27 (MSLD…YERE), 39 to 79 (HDML…NEQM), and 108 to 139 (NRSK…SKCE). Residues 1-60 (MSLDFGSVALPVQNEDEEYDEEDYEREKELQQLLTDLPHDMLDDDLSSPELQYSDCSEDG) form an interaction with PLK4 region. Acidic residues predominate over residues 14–24 (NEDEEYDEEDY). Basic and acidic residues predominate over residues 108–123 (NRSKTEDRHPVYHPEE). Residues 234-490 (ENMQIIQLQV…ISLYESAAKL (257 aa)) adopt a coiled-coil conformation. The segment covering 587-604 (DEKSIEVETKTDTSEKPK) has biased composition (basic and acidic residues). Residues 587-611 (DEKSIEVETKTDTSEKPKNQLWPES) are disordered. Coiled-coil stretches lie at residues 615–664 (DVVR…QDFD), 700–772 (EKQQ…LEKE), and 902–993 (AVSE…INEV). The tract at residues 1120 to 1142 (ELSKDSASQGTGQGDPGPAAGHH) is disordered. Residues 1170-1241 (HCFQELEKAK…LEELQTLCKT (72 aa)) are a coiled coil. Thr-1241 is subject to Phosphothreonine.

This sequence belongs to the CEP152 family. As to quaternary structure, interacts (via N-terminus) with PLK4; the interaction is mutally exclusive with a PLK4:CEP192 interaction. Interacts (via C-terminus) with CPAP (via-N-terminus). Interacts with CINP. Interacts with CDK5RAP2, WDR62, CEP63 and CEP131. CEP63, CDK5RAP2, CEP152, WDR62 are proposed to form a stepwise assembled complex at the centrosome forming a ring near parental centrioles. Interacts with DEUP1; this interaction recruits CEP152 to the deuterosome. The interactions with CEP63 and DEUP1 are mutually exclusive. Interacts with CCDC66.

Its subcellular location is the cytoplasm. The protein localises to the cytoskeleton. The protein resides in the microtubule organizing center. It is found in the centrosome. It localises to the centriole. Its function is as follows. Necessary for centrosome duplication; the function also seems to involve CEP63, CDK5RAP2 and WDR62 through a stepwise assembled complex at the centrosome that recruits CDK2 required for centriole duplication. Acts as a molecular scaffold facilitating the interaction of PLK4 and CPAP, 2 molecules involved in centriole formation. Proposed to snatch PLK4 away from PLK4:CEP92 complexes in early G1 daughter centriole and to reposition PLK4 at the outer boundary of a newly forming CEP152 ring structure. Also plays a key role in deuterosome-mediated centriole amplification in multiciliated that can generate more than 100 centrioles. Overexpression of CEP152 can drive amplification of centrioles. The protein is Centrosomal protein of 152 kDa of Homo sapiens (Human).